The chain runs to 2399 residues: Norsolorinic acid synthase (2399 aa).

Residues Leu-10–His-247 form a starter unit:ACP transacylase (SAT) domain region. The Ketosynthase family 3 (KS3) domain occupies Lys-372–Asp-805. Residues Cys-544, His-679, and His-722 each act as for beta-ketoacyl synthase activity in the active site. The segment at Phe-905–Gly-1192 is malonyl-CoA:ACP transacylase (MAT) domain. Residue Ser-995 is the For acyl/malonyl transferase activity of the active site. The disordered stretch occupies residues Val-1307–Lys-1327. Over residues Thr-1315–Lys-1327 the composition is skewed to basic and acidic residues. The N-terminal hotdog fold stretch occupies residues His-1340–Gln-1483. The PKS/mFAS DH domain maps to His-1340–Arg-1658. Positions Gln-1353–Arg-1658 are product template (PT) domain. His-1372 acts as the Proton acceptor; for dehydratase activity in catalysis. Residues Leu-1510–Arg-1658 are C-terminal hotdog fold. Catalysis depends on Asp-1570, which acts as the Proton donor; for dehydratase activity. Residues Met-1665–Ala-1734 are disordered. The span at Gly-1677–Ala-1698 shows a compositional bias: low complexity. Over residues Ala-1708–Lys-1723 the composition is skewed to pro residues. Residues Pro-1724–Ala-1734 are compositionally biased toward low complexity. Carrier domains lie at Lys-1733–Ala-1812, Ser-1877–Gly-1953, and Val-2020–Ser-2099. Residues Ser-1770, Ser-1911, and Ser-2057 each carry the O-(pantetheine 4'-phosphoryl)serine modification. Over residues Ser-2098–Ala-2115 the composition is skewed to low complexity. Residues Ser-2098–Thr-2149 form a disordered region. Residues Pro-2140 to Thr-2149 show a composition bias toward polar residues. Positions Thr-2164–Leu-2393 are thioesterase/Claisen cyclase (TE/CLC) domain. Catalysis depends on Ser-2234, which acts as the For thioesterase activity.

Requires pantetheine 4'-phosphate as cofactor.

The catalysed reaction is hexanoyl-[ACP] + 7 malonyl-CoA + 6 H(+) = noranthrone + holo-[ACP] + 7 CO2 + 7 CoA + 2 H2O. It functions in the pathway mycotoxin biosynthesis. Functionally, polyketide synthase; part of the fragmented gene cluster that mediates the biosynthesis of dothistromin (DOTH), a polyketide toxin very similar in structure to the aflatoxin precursor, versicolorin B. The first step of the pathway is the conversion of acetate to norsolorinic acid (NOR) and requires the fatty acid synthase subunits hexA and hexB, as well as the polyketide synthase pksA. PksA combines a hexanoyl starter unit and 7 malonyl-CoA extender units to synthesize the precursor NOR. The hexanoyl starter unit is provided to the acyl-carrier protein (ACP) domain by the fungal fatty acid synthase hexA/hexB. The second step is the conversion of NOR to averantin (AVN) and requires the norsolorinic acid ketoreductase nor1, which catalyzes the dehydration of norsolorinic acid to form (1'S)-averantin. The cytochrome P450 monooxygenase avnA then catalyzes the hydroxylation of AVN to 5'hydroxyaverantin (HAVN). The next step is performed by adhA that transforms HAVN to averufin (AVF). Averufin might then be converted to hydroxyversicolorone by cypX and avfA. Hydroxyversicolorone is further converted versiconal hemiacetal acetate (VHA) by moxY. VHA is then the substrate for the versiconal hemiacetal acetate esterase est1 to yield versiconal (VAL). Versicolorin B synthase vbsA then converts VAL to versicolorin B (VERB) by closing the bisfuran ring. Then, the activity of the versicolorin B desaturase verB leads to versicolorin A (VERA). DotB, a predicted chloroperoxidase, may perform epoxidation of the A-ring of VERA. Alternatively, a cytochrome P450, such as cypX or avnA could catalyze this step. It is also possible that another, uncharacterized, cytochrome P450 enzyme is responsible for this step. Opening of the epoxide could potentially be achieved by the epoxide hydrolase epoA. However, epoA seems not to be required for DOTH biosynthesis, but other epoxide hydrolases may have the ability to complement this hydrolysis. Alternatively, opening of the epoxide ring could be achieved non-enzymatically. The next step is the deoxygenation of ring A to yield the 5,8-dihydroxyanthraquinone which is most likely catalyzed by the NADPH dehydrogenase encoded by ver1. The last stages of DOTH biosynthesis are proposed to involve hydroxylation of the bisfuran. OrdB and norB might have oxidative roles here. An alternative possibility is that cytochrome P450 monoogenases such as avnA and cypX might perform these steps in addition to previously proposed steps. In Dothistroma septosporum (Red band needle blight fungus), this protein is Norsolorinic acid synthase.